The chain runs to 365 residues: Phosphatidylcholine:ceramide cholinephosphotransferase 2 (365 aa).

Positions 1 to 14 are enriched in basic and acidic residues; the sequence is MDIIETAKLEEHLE. The tract at residues 1–52 is disordered; it reads MDIIETAKLEEHLENQPSDPTNTYTRPTEPVEEENKNGNGKPKSLSSGLRKG. A compositionally biased stretch (polar residues) spans 15-26; that stretch reads NQPSDPTNTYTR. The next 5 helical transmembrane spans lie at 80-100, 128-148, 159-179, 218-240, and 248-268; these read GIAF…ITVV, FSVS…QWLF, FCFI…VTTL, HILC…YLFI, and FWWY…CILV. The active site involves H229. Active-site residues include H272 and D276. Residues 273 to 290 traverse the membrane as a helical segment; the sequence is YTVDVIIAYYITTRLFWW. The Cytoplasmic segment spans residues 291–365; the sequence is YHSMANEKNL…KIGEDNEKST (75 aa). 4 S-palmitoyl cysteine lipidation sites follow: C331, C332, C343, and C348.

The protein belongs to the sphingomyelin synthase family. In terms of processing, palmitoylated on Cys-331, Cys-332, Cys-343 and Cys-348; which plays an important role in plasma membrane localization.

Its subcellular location is the cell membrane. It localises to the golgi apparatus membrane. It catalyses the reaction an N-acylsphing-4-enine + a 1,2-diacyl-sn-glycero-3-phosphocholine = a sphingomyelin + a 1,2-diacyl-sn-glycerol. The catalysed reaction is an N-acylsphinganine + a 1,2-diacyl-sn-glycero-3-phosphocholine = an N-acylsphinganine-1-phosphocholine + a 1,2-diacyl-sn-glycerol. The enzyme catalyses an N-acyl-(4R)-4-hydroxysphinganine + a 1,2-diacyl-sn-glycero-3-phosphocholine = an N-acyl-(4R)-4-hydroxysphinganine-phosphocholine + a 1,2-diacyl-sn-glycerol. It carries out the reaction an N-acylsphing-4-enine + a 1,2-diacyl-sn-glycero-3-phosphoethanolamine = an N-acylsphing-4-enine 1-phosphoethanolamine + a 1,2-diacyl-sn-glycerol. It catalyses the reaction an N-acylsphinganine + a 1,2-diacyl-sn-glycero-3-phosphoethanolamine = an N-acylsphinganine-1-phosphoethanolamine + a 1,2-diacyl-sn-glycerol. The catalysed reaction is an N-acyl-(4R)-4-hydroxysphinganine + a 1,2-diacyl-sn-glycero-3-phosphoethanolamine = an N-acyl-(4R)-4-hydroxysphinganine-1-phosphoethanolamine + a 1,2-diacyl-sn-glycerol. The enzyme catalyses 1,2-dihexadecanoyl-sn-glycero-3-phosphocholine + an N-acylsphing-4-enine = 1,2-dihexadecanoyl-sn-glycerol + a sphingomyelin. It carries out the reaction 1-(9Z-octadecenoyl)-2-acyl-sn-3-glycerol + a sphingomyelin = a 1-(9Z-octadecenoyl)-2-acyl-sn-glycero-3-phosphocholine + an N-acylsphing-4-enine. It catalyses the reaction N-hexadecanoylsphinganine + a 1,2-diacyl-sn-glycero-3-phosphocholine = N-hexadecanoyl-sphinganine-1-phosphocholine + a 1,2-diacyl-sn-glycerol. The catalysed reaction is N-hexadecanoyl-(4R)-hydroxysphinganine + a 1,2-diacyl-sn-glycero-3-phosphocholine = N-hexadecanoyl-(4R)-hydroxysphinganine-phosphocholine + a 1,2-diacyl-sn-glycerol. The enzyme catalyses N-hexadecanoylsphinganine + a 1,2-diacyl-sn-glycero-3-phosphoethanolamine = N-hexadecanoyl-sphinganine-1-phosphoethanolamine + a 1,2-diacyl-sn-glycerol. It carries out the reaction N-hexadecanoyl-(4R)-hydroxysphinganine + a 1,2-diacyl-sn-glycero-3-phosphoethanolamine = N-hexadecanoyl-(4R)-hydroxysphinganine-1-phosphoethanolamine + a 1,2-diacyl-sn-glycerol. Its pathway is sphingolipid metabolism. Sphingomyelin synthase that primarily contributes to sphingomyelin synthesis and homeostasis at the plasma membrane. Catalyzes the reversible transfer of phosphocholine moiety in sphingomyelin biosynthesis: in the forward reaction transfers phosphocholine head group of phosphatidylcholine (PC) on to ceramide (CER) to form ceramide phosphocholine (sphingomyelin, SM) and diacylglycerol (DAG) as by-product, and in the reverse reaction transfers phosphocholine from SM to DAG to form PC and CER. The direction of the reaction appears to depend on the levels of CER and DAG in the plasma membrane. Does not use free phosphorylcholine or CDP-choline as donors. Can also transfer phosphoethanolamine head group of phosphatidylethanolamine (PE) on to ceramide (CER) to form ceramide phosphoethanolamine (CPE). Regulates receptor-mediated signal transduction via mitogenic DAG and proapoptotic CER, as well as via SM, a structural component of membrane rafts that serve as platforms for signal transduction and protein sorting. To a lesser extent, plays a role in secretory transport via regulation of DAG pool at the Golgi apparatus and its downstream effects on PRKD1. Required for normal bone matrix mineralization. This Macaca fascicularis (Crab-eating macaque) protein is Phosphatidylcholine:ceramide cholinephosphotransferase 2 (SGMS2).